A 355-amino-acid polypeptide reads, in one-letter code: Tetraspanin-10 (355 aa).

The tract at residues 1 to 33 is disordered; that stretch reads MEEGERSPLLSQETAGQKPLSVHRPPTSGCLGP. At 1–78 the chain is on the cytoplasmic side; the sequence is MEEGERSPLL…LSPGSSCVKY (78 aa). Residues 79–99 traverse the membrane as a helical segment; the sequence is LIFLSNFPFSLLGLLALAIGL. Over 100-120 the chain is Extracellular; the sequence is WGLAVKGSLGSDLGGPLPTDP. A helical transmembrane segment spans residues 121 to 141; that stretch reads MLGLALGGLVVSAASLAGCLG. Over 142–154 the chain is Cytoplasmic; sequence ALCENTCLLRGFS. The chain crosses the membrane as a helical span at residues 155–175; sequence GGILAFLVLEAVAGALVVALW. The Extracellular portion of the chain corresponds to 176 to 355; that stretch reads GPLQDSLEHT…APPAAKPARG (180 aa). Cystine bridges form between cysteine 212-cysteine 279, cysteine 213-cysteine 243, cysteine 229-cysteine 237, and cysteine 244-cysteine 258. Asparagine 228 carries N-linked (GlcNAc...) asparagine glycosylation. The segment at 327 to 355 is disordered; that stretch reads YGPGAHGEDRAGPQSPSPGAPPAAKPARG. Over residues 341–355 the composition is skewed to pro residues; it reads SPSPGAPPAAKPARG.

The protein belongs to the tetraspanin (TM4SF) family. In terms of assembly, interacts with ADAM10. In terms of tissue distribution, expressed in the eye, including iris, ciliary body, retinal pigment epithelium, but not lens (protein level).

It is found in the cell membrane. In terms of biological role, part of TspanC8 subgroup, composed of 6 members that interact with the transmembrane metalloprotease ADAM10. This interaction is required for ADAM10 exit from the endoplasmic reticulum and for enzymatic maturation and trafficking to the cell surface as well as substrate specificity. Different TspanC8/ADAM10 complexes have distinct substrates. The polypeptide is Tetraspanin-10 (Homo sapiens (Human)).